A 297-amino-acid polypeptide reads, in one-letter code: N-acetylmannosamine kinase (297 aa).

ATP is bound by residues 5–12 and 132–139; these read ALDIGGTK and GVGGGIIL. Zn(2+) is bound by residues H156, C166, C168, and C173.

Belongs to the ROK (NagC/XylR) family. NanK subfamily. Homodimer.

The enzyme catalyses an N-acyl-D-mannosamine + ATP = an N-acyl-D-mannosamine 6-phosphate + ADP + H(+). Its pathway is amino-sugar metabolism; N-acetylneuraminate degradation; D-fructose 6-phosphate from N-acetylneuraminate: step 2/5. In terms of biological role, catalyzes the phosphorylation of N-acetylmannosamine (ManNAc) to ManNAc-6-P. The polypeptide is N-acetylmannosamine kinase (Pasteurella multocida (strain Pm70)).